Consider the following 494-residue polypeptide: Folate-biopterin transporter (494 aa).

12 helical membrane-spanning segments follow: residues 31-51 (APSW…VLGL), 64-84 (LGLS…PWIL), 104-124 (SYLW…AAWV), 133-153 (VLLF…SLVV), 170-190 (LTWG…GALL), 197-217 (TVFA…FLIS), 246-266 (ILLP…ESAF), 284-303 (VRLV…QRFL), 310-330 (VIMG…LILI), 346-366 (LGDS…VLVL), 375-395 (IEAT…VLSF), and 415-435 (LALL…FLGL). A disordered region spans residues 441–461 (PQVKDKTEKEDNPDDPGDRLV).

This sequence belongs to the major facilitator superfamily. Folate-biopterin transporter (TC 2.A.71) family.

It localises to the cell membrane. Mediates folate monoglutamate transport involved in tetrahydrofolate biosynthesis. It also mediates transport of antifolates, such as methotrexate and aminopterin. In Synechocystis sp. (strain ATCC 27184 / PCC 6803 / Kazusa), this protein is Folate-biopterin transporter.